The following is an 880-amino-acid chain: Pentatricopeptide repeat-containing protein At3g07290, mitochondrial (880 aa).

Residues 1-89 (MLLIHIRSTR…RSDNDICVRF (89 aa)) constitute a mitochondrion transit peptide. PPR repeat units lie at residues 159 to 193 (NYPC…GFVV), 194 to 228 (GMID…GFVL), 229 to 259 (DSHI…MSKE), 265 to 299 (NSVS…GCQP), 300 to 334 (STRT…GCKP), 335 to 369 (NVHT…RIFP), 370 to 404 (SVIT…ACKP), 405 to 439 (NVRT…GLSP), 440 to 474 (DIVS…DIEP), 475 to 509 (DCLT…GISL), 510 to 544 (DEVT…RILT), 545 to 579 (TPHS…GLVP), 580 to 614 (SVVT…GCLP), 615 to 649 (NVYP…GVSP), 650 to 684 (NHVT…GYEL), 685 to 721 (NDRI…ETDP), 738 to 768 (ISGL…VLER), 772 to 806 (LEKA…GFVP), and 807 to 842 (SFKS…GVVE).

It belongs to the PPR family. P subfamily.

The protein localises to the mitochondrion. The chain is Pentatricopeptide repeat-containing protein At3g07290, mitochondrial from Arabidopsis thaliana (Mouse-ear cress).